Here is a 565-residue protein sequence, read N- to C-terminus: NAD-dependent malic enzyme (565 aa).

Tyr-104 functions as the Proton donor in the catalytic mechanism. Position 157 (Arg-157) interacts with NAD(+). Residue Lys-175 is the Proton acceptor of the active site. Glu-246, Asp-247, and Asp-270 together coordinate a divalent metal cation. Residues Asp-270 and Asn-418 each contribute to the NAD(+) site.

This sequence belongs to the malic enzymes family. As to quaternary structure, homotetramer. The cofactor is Mg(2+). Requires Mn(2+) as cofactor.

The catalysed reaction is (S)-malate + NAD(+) = pyruvate + CO2 + NADH. The enzyme catalyses oxaloacetate + H(+) = pyruvate + CO2. The sequence is that of NAD-dependent malic enzyme from Photorhabdus laumondii subsp. laumondii (strain DSM 15139 / CIP 105565 / TT01) (Photorhabdus luminescens subsp. laumondii).